Here is a 792-residue protein sequence, read N- to C-terminus: MKEDNCLHAALICLGMLYYSHAITTEKLNHVRPSLHGHHEKGKEGQVLHRSKRGWVWNQFFVIEEYTGPDPVLVGRLHSDIDSGDGNIKYILSGEGAGIIFVIDDKSGNIHATKTLDREERAQYTLTAQAVDRNTNRPLEPPSEFIVKVQDINDNPPEFLHENYHANVPERSNVGTSVIQVTASDADDPTYGNSAKLVYSILEGQPYFSVEAQTGIIRTALPNMDREAKEEYHVVIQAKDMGGHMGGLSGTTKVTITLTDVNDNPPKFPQSVYQMSVSEAAVPGEEVGRVKAKDPDIGENGLVAYSIIDGDGMDMFEITTDYETQEGVVKLKKVLDFETKKSYSLKVEAANVHIDPKFISNGPFKDTVTVKITVEDADEPPVFLKPSYIFEVQENAASGTVVGKVHAKDPDAANSAIRYSIDRHTDLERYFTINADDGNIKTIKALDREEIAWHNISVFAVEVHKQHQEAKVPVAIKVVDVNDNAPKFAAAYEAFVCENARSNQQFITISADDKDDSANGPRFIFSLPPEIIHNPNFSLRDNRDNTASVLVRREGFSRQKQDLYLLPIVISDGGLPPMSSTNTLTIRVCGCDSNGSLLSCNAEAYILNAGLSTGALIAILACIVILLVIVVLFVTLKRQKKEPLIVFEEEDVRENIITYDDEGGGEEDTEAFDIATLQNPDGINGFIPRKDIKPEYQYMPRPGLRPAPNSVDVDDFINTRIQEADNDPTAPPYDSIQIYGYEGRGSVAGSLSSLESATTDSDLDYDYLQNWGPRFKKLADLYGSKDTFDDDS.

Residues 1–22 (MKEDNCLHAALICLGMLYYSHA) form the signal peptide. A propeptide spanning residues 23-53 (ITTEKLNHVRPSLHGHHEKGKEGQVLHRSKR) is cleaved from the precursor. Cadherin domains follow at residues 54-159 (GWVW…PPEF), 160-268 (LHEN…PPKF), 269-383 (PQSV…PPVF), 384-486 (LKPS…DNAP), and 487-608 (KFAA…YILN). Residues 54–613 (GWVWNQFFVI…AYILNAGLST (560 aa)) lie on the Extracellular side of the membrane. N-linked (GlcNAc...) asparagine glycosylation is found at asparagine 455, asparagine 536, and asparagine 594. A helical transmembrane segment spans residues 614-634 (GALIAILACIVILLVIVVLFV). Over 635–792 (TLKRQKKEPL…GSKDTFDDDS (158 aa)) the chain is Cytoplasmic.

It localises to the cell membrane. Cadherins are calcium-dependent cell adhesion proteins. They preferentially interact with themselves in a homophilic manner in connecting cells; cadherins may thus contribute to the sorting of heterogeneous cell types. Required for proper focal adhesion assembly. Involved in the regulation of cell migration. In Gallus gallus (Chicken), this protein is Cadherin-11 (CDH11).